The sequence spans 69 residues: DNA-directed RNA polymerase subunit omega (69 aa).

It belongs to the RNA polymerase subunit omega family. As to quaternary structure, the RNAP catalytic core consists of 2 alpha, 1 beta, 1 beta' and 1 omega subunit. When a sigma factor is associated with the core the holoenzyme is formed, which can initiate transcription.

It catalyses the reaction RNA(n) + a ribonucleoside 5'-triphosphate = RNA(n+1) + diphosphate. Promotes RNA polymerase assembly. Latches the N- and C-terminal regions of the beta' subunit thereby facilitating its interaction with the beta and alpha subunits. The sequence is that of DNA-directed RNA polymerase subunit omega from Geotalea daltonii (strain DSM 22248 / JCM 15807 / FRC-32) (Geobacter daltonii).